Consider the following 886-residue polypeptide: Chitin synthase 3 (886 aa).

Disordered stretches follow at residues 1–70 and 86–138; these read MQQG…YQTD and PYEP…AGGG. Residues 7–17 show a composition bias toward basic and acidic residues; that stretch reads LDDRPYGRPEQ. Polar residues predominate over residues 37–56; it reads PSDQLQLNAAQSVDNLSRNS. Asparagine 51 is a glycosylation site (N-linked (GlcNAc...) asparagine). The span at 106-122 shows a compositional bias: basic and acidic residues; sequence YDHDDLRPMLPHQDSHA. Asparagine 196 is a glycosylation site (N-linked (GlcNAc...) asparagine). The next 7 helical transmembrane spans lie at 428–448, 526–546, 556–576, 602–622, 637–657, 683–703, and 712–732; these read SAFG…YVAL, RWLN…YQFF, VMLF…WFAV, ILGV…FVLS, MVYF…FIAV, TLIV…FLMF, and FVQY…YAFC. The segment at 745–768 is disordered; the sequence is DQAEKLPSVSTKDGSGKTDLPDES. The next 2 membrane-spanning stretches (helical) occupy residues 813–833 and 858–878; these read VLAW…AAGL and VVLW…MWFL.

Belongs to the chitin synthase family. Class I subfamily.

It is found in the cell membrane. It carries out the reaction [(1-&gt;4)-N-acetyl-beta-D-glucosaminyl](n) + UDP-N-acetyl-alpha-D-glucosamine = [(1-&gt;4)-N-acetyl-beta-D-glucosaminyl](n+1) + UDP + H(+). Functionally, polymerizes chitin, a structural polymer of the cell wall and septum, by transferring the sugar moiety of UDP-GlcNAc to the non-reducing end of the growing chitin polymer. Involved in tolerance to hyperosmotic conditions. CHS3 is the only V.dahliae chitin synthase that is not involved in virulence. This Verticillium dahliae (strain VdLs.17 / ATCC MYA-4575 / FGSC 10137) (Verticillium wilt) protein is Chitin synthase 3.